We begin with the raw amino-acid sequence, 460 residues long: Endoglucanase C (460 aa).

Residues M1–A32 form the signal peptide. The active-site Proton donor is E99. D155 functions as the Nucleophile in the catalytic mechanism. Residues K400–N460 form the Dockerin domain.

It belongs to the glycosyl hydrolase 8 (cellulase D) family. Monomer. There are two forms of the cellulase. The shorter form lacks probably the C-terminal reiterated domains.

It carries out the reaction Endohydrolysis of (1-&gt;4)-beta-D-glucosidic linkages in cellulose, lichenin and cereal beta-D-glucans.. Its pathway is glycan metabolism; cellulose degradation. The biological conversion of cellulose to glucose generally requires three types of hydrolytic enzymes: (1) Endoglucanases which cut internal beta-1,4-glucosidic bonds; (2) Exocellobiohydrolases that cut the disaccharide cellobiose from the non-reducing end of the cellulose polymer chain; (3) Beta-1,4-glucosidases which hydrolyze the cellobiose and other short cello-oligosaccharides to glucose. In Ruminiclostridium cellulolyticum (strain ATCC 35319 / DSM 5812 / JCM 6584 / H10) (Clostridium cellulolyticum), this protein is Endoglucanase C (celCCC).